We begin with the raw amino-acid sequence, 149 residues long: D-aminoacyl-tRNA deacylase (149 aa).

The short motif at 139 to 140 (GP) is the Gly-cisPro motif, important for rejection of L-amino acids element.

The protein belongs to the DTD family. Homodimer.

It localises to the cytoplasm. It carries out the reaction glycyl-tRNA(Ala) + H2O = tRNA(Ala) + glycine + H(+). The enzyme catalyses a D-aminoacyl-tRNA + H2O = a tRNA + a D-alpha-amino acid + H(+). Functionally, an aminoacyl-tRNA editing enzyme that deacylates mischarged D-aminoacyl-tRNAs. Also deacylates mischarged glycyl-tRNA(Ala), protecting cells against glycine mischarging by AlaRS. Acts via tRNA-based rather than protein-based catalysis; rejects L-amino acids rather than detecting D-amino acids in the active site. By recycling D-aminoacyl-tRNA to D-amino acids and free tRNA molecules, this enzyme counteracts the toxicity associated with the formation of D-aminoacyl-tRNA entities in vivo and helps enforce protein L-homochirality. In Schizosaccharomyces pombe (strain 972 / ATCC 24843) (Fission yeast), this protein is D-aminoacyl-tRNA deacylase (dtd1).